Reading from the N-terminus, the 132-residue chain is Fatty acid-binding protein, liver (132 aa).

The residue at position 1 (Val1) is an N-acetylvaline. Phosphotyrosine; by Tyr-kinases is present on Tyr19.

Belongs to the calycin superfamily. Fatty-acid binding protein (FABP) family.

The protein localises to the cytoplasm. Functionally, FABPs are thought to play a role in the intracellular transport of long-chain fatty acids and their acyl-CoA esters. This is Fatty acid-binding protein, liver from Ginglymostoma cirratum (Nurse shark).